The chain runs to 208 residues: Small ribosomal subunit protein uS4 (208 aa).

Positions 28-48 (YMERRPYGPGEHGRARKKQDS) are disordered. In terms of domain architecture, S4 RNA-binding spans 95–160 (MRLDALVLRA…MPPFQVAAAG (66 aa)).

The protein belongs to the universal ribosomal protein uS4 family. In terms of assembly, part of the 30S ribosomal subunit. Contacts protein S5. The interaction surface between S4 and S5 is involved in control of translational fidelity.

Functionally, one of the primary rRNA binding proteins, it binds directly to 16S rRNA where it nucleates assembly of the body of the 30S subunit. Its function is as follows. With S5 and S12 plays an important role in translational accuracy. This chain is Small ribosomal subunit protein uS4, found in Arthrobacter sp. (strain FB24).